We begin with the raw amino-acid sequence, 259 residues long: Aspartate/glutamate leucyltransferase (259 aa).

The protein belongs to the R-transferase family. Bpt subfamily.

It localises to the cytoplasm. It catalyses the reaction N-terminal L-glutamyl-[protein] + L-leucyl-tRNA(Leu) = N-terminal L-leucyl-L-glutamyl-[protein] + tRNA(Leu) + H(+). The enzyme catalyses N-terminal L-aspartyl-[protein] + L-leucyl-tRNA(Leu) = N-terminal L-leucyl-L-aspartyl-[protein] + tRNA(Leu) + H(+). In terms of biological role, functions in the N-end rule pathway of protein degradation where it conjugates Leu from its aminoacyl-tRNA to the N-termini of proteins containing an N-terminal aspartate or glutamate. The polypeptide is Aspartate/glutamate leucyltransferase (Sinorhizobium medicae (strain WSM419) (Ensifer medicae)).